The following is a 278-amino-acid chain: MSGEVWRWNKQAEMNSIRDCLKHCNSIAIDTEFPGCLKETPMDASDEIRYRDMKFNVDNTHLIQLGLTLFGKGITKTWEINLSDFNESKSLKNDKSIAFLKNNGLDLDKIREEGIGIEEFFMEFSQILNEKHGKMRWVTFQGSYDKAYLLKGLTRKPLPETSKEFDETVQQLLGRFVYDVKKMAGLCSGLSSRFGLQRIADVLQMRRVGKAHHAGSDSELTARVFTKLIFDLVNSRKESTGRRADDQQYQLEQQQHQQQLMMTRCYIPIPVQGRNYVL.

The a divalent metal cation site is built by Asp-30, Glu-32, Asp-145, and Asp-217.

It belongs to the CAF1 family. Component of the CCR4-NOT complex, at least composed of CRR4 and CAF1 proteins. Requires a divalent metal cation as cofactor.

The protein localises to the nucleus. It is found in the cytoplasm. It catalyses the reaction Exonucleolytic cleavage of poly(A) to 5'-AMP.. Functionally, ubiquitous transcription factor required for a diverse set of processes. It is a component of the CCR4 complex involved in the control of gene expression. In Arabidopsis thaliana (Mouse-ear cress), this protein is Probable CCR4-associated factor 1 homolog 5 (CAF1-5).